The sequence spans 115 residues: Meromycolate extension acyl carrier protein (115 aa).

Residues 3–81 enclose the Carrier domain; that stretch reads VTQEEIIAGI…DVVTYIQKLE (79 aa). Ser-41 is modified (O-(pantetheine 4'-phosphoryl)serine).

The protein belongs to the acyl carrier protein (ACP) family. In terms of processing, 4'-phosphopantetheine is transferred from CoA to a specific serine of apo-AcpM.

It is found in the cytoplasm. In terms of biological role, acyl carrier protein involved in meromycolate extension. This Mycobacterium leprae (strain TN) protein is Meromycolate extension acyl carrier protein (acpM).